A 504-amino-acid chain; its full sequence is ATP synthase subunit alpha (504 aa).

170–177 (GDRQTGKT) is a binding site for ATP.

This sequence belongs to the ATPase alpha/beta chains family. In terms of assembly, F-type ATPases have 2 components, CF(1) - the catalytic core - and CF(0) - the membrane proton channel. CF(1) has five subunits: alpha(3), beta(3), gamma(1), delta(1), epsilon(1). CF(0) has three main subunits: a(1), b(2) and c(9-12). The alpha and beta chains form an alternating ring which encloses part of the gamma chain. CF(1) is attached to CF(0) by a central stalk formed by the gamma and epsilon chains, while a peripheral stalk is formed by the delta and b chains.

The protein localises to the cell membrane. It carries out the reaction ATP + H2O + 4 H(+)(in) = ADP + phosphate + 5 H(+)(out). In terms of biological role, produces ATP from ADP in the presence of a proton gradient across the membrane. The alpha chain is a regulatory subunit. This Shouchella clausii (strain KSM-K16) (Alkalihalobacillus clausii) protein is ATP synthase subunit alpha.